The chain runs to 870 residues: Pre-mRNA-processing factor 40 homolog B (870 aa).

2 WW domains span residues 92-125 (GPPR…KPSV) and 133-166 (LLSQ…RPKD). The tract at residues 146–277 (TGKPYYYNNQ…RSGLSWSNRE (132 aa)) is disordered. Residue lysine 148 is modified to N6-acetyllysine. A Glycyl lysine isopeptide (Lys-Gly) (interchain with G-Cter in SUMO2) cross-link involves residue lysine 175. The segment covering 182-191 (QQTQQLQTLQ) has biased composition (low complexity). Residues 192–211 (PQPPQPQPDPPPIPPGPIPV) show a composition bias toward pro residues. FF domains follow at residues 276-330 (REKA…YKAQ), 340-397 (RLRA…VLFF), 410-470 (RRRN…HIRA), 490-550 (QRKN…YVEE), 554-610 (RFHD…LLEK), and 625-682 (RMRR…FLQV). Positions 604 to 640 (FNSLLEKAEARETEREKEEARRMRRREAAFRSMLRQA) form a coiled coil. The disordered stretch occupies residues 690 to 870 (HLHTKGRKHG…TLLQQLDDHQ (181 aa)). A compositionally biased stretch (basic residues) spans 691 to 711 (LHTKGRKHGRKGKKHHRKRSH). Low complexity-rich tracts occupy residues 739-756 (SESG…ESGG) and 764-774 (SPSSHLLLGSD). Phosphoserine is present on serine 764. Positions 778–794 (RKTKKPKKKTKKRRHKS) are enriched in basic residues. Residues 804–824 (EDKAGKESEDREQEQDREPRQ) show a composition bias toward basic and acidic residues. Position 831 is a phosphoserine (serine 831). A Glycyl lysine isopeptide (Lys-Gly) (interchain with G-Cter in SUMO2) cross-link involves residue lysine 837. Serine 851 carries the phosphoserine modification.

It belongs to the PRPF40 family. As to quaternary structure, interacts with the N-terminus of HD.

The protein localises to the nucleus speckle. Its function is as follows. May be involved in pre-mRNA splicing. The sequence is that of Pre-mRNA-processing factor 40 homolog B (Prpf40b) from Mus musculus (Mouse).